The sequence spans 228 residues: Cytochrome b6-f complex iron-sulfur subunit 1, chloroplastic (228 aa).

The transit peptide at 1-49 directs the protein to the chloroplast; sequence MASSTLSPVTQLCSSKSGLSSVSQCLLVKPMKINSHGLGKDKRMKVKCM. Residues 72–92 traverse the membrane as a helical segment; that stretch reads LLGALSLPTAGMLVPYGTFFV. One can recognise a Rieske domain in the interval 115–211; that stretch reads ASEWLKTHPP…ADIDDGKVVF (97 aa). [2Fe-2S] cluster-binding residues include C157, H159, C175, and H178. The cysteines at positions 162 and 177 are disulfide-linked.

The protein belongs to the Rieske iron-sulfur protein family. In terms of assembly, the 4 large subunits of the cytochrome b6-f complex are cytochrome b6, subunit IV (17 kDa polypeptide, petD), cytochrome f and the Rieske protein, while the 4 small subunits are petG, petL, petM and petN. The complex functions as a dimer. The cofactor is [2Fe-2S] cluster.

It localises to the plastid. The protein resides in the chloroplast thylakoid membrane. It carries out the reaction 2 oxidized [plastocyanin] + a plastoquinol + 2 H(+)(in) = 2 reduced [plastocyanin] + a plastoquinone + 4 H(+)(out). Component of the cytochrome b6-f complex, which mediates electron transfer between photosystem II (PSII) and photosystem I (PSI), cyclic electron flow around PSI, and state transitions. This chain is Cytochrome b6-f complex iron-sulfur subunit 1, chloroplastic (petC1), found in Nicotiana tabacum (Common tobacco).